We begin with the raw amino-acid sequence, 88 residues long: Small ribosomal subunit protein uS15 (88 aa).

The protein belongs to the universal ribosomal protein uS15 family. In terms of assembly, part of the 30S ribosomal subunit. Forms a bridge to the 50S subunit in the 70S ribosome, contacting the 23S rRNA.

Functionally, one of the primary rRNA binding proteins, it binds directly to 16S rRNA where it helps nucleate assembly of the platform of the 30S subunit by binding and bridging several RNA helices of the 16S rRNA. Its function is as follows. Forms an intersubunit bridge (bridge B4) with the 23S rRNA of the 50S subunit in the ribosome. The chain is Small ribosomal subunit protein uS15 from Variovorax paradoxus (strain S110).